Here is a 274-residue protein sequence, read N- to C-terminus: NH(3)-dependent NAD(+) synthetase (274 aa).

46–53 (GISGGQDS) contacts ATP. Position 52 (aspartate 52) interacts with Mg(2+). Deamido-NAD(+) is bound at residue arginine 140. ATP is bound at residue threonine 160. Residue glutamate 165 participates in Mg(2+) binding. Lysine 173 and aspartate 180 together coordinate deamido-NAD(+). Positions 189 and 211 each coordinate ATP. A deamido-NAD(+)-binding site is contributed by 260 to 261 (HK).

Belongs to the NAD synthetase family. As to quaternary structure, homodimer.

The catalysed reaction is deamido-NAD(+) + NH4(+) + ATP = AMP + diphosphate + NAD(+) + H(+). The protein operates within cofactor biosynthesis; NAD(+) biosynthesis; NAD(+) from deamido-NAD(+) (ammonia route): step 1/1. Functionally, catalyzes the ATP-dependent amidation of deamido-NAD to form NAD. Uses ammonia as a nitrogen source. In Lysinibacillus sphaericus (strain C3-41), this protein is NH(3)-dependent NAD(+) synthetase.